The sequence spans 1147 residues: Protein lin-41 (1147 aa).

Residues Met-1–Gln-93 form a disordered region. Low complexity predominate over residues Ser-33 to Asp-47. Over residues Ser-48–Asn-65 the composition is skewed to basic and acidic residues. Residues Pro-84–Gln-93 are compositionally biased toward low complexity. An RING-type zinc finger spans residues Cys-114–Gly-155. The B box-type; atypical zinc-finger motif lies at Met-366–Leu-412. Zn(2+)-binding residues include Cys-371, Cys-374, Cys-394, and His-398. Positions Ala-565–Lys-618 form a coiled coil. A Filamin repeat occupies Ala-723–Ile-817. NHL repeat units lie at residues Ile-832–Asp-875, Ile-879–Asn-922, Leu-926–Gln-969, Arg-974–Arg-1017, Met-1022–Asp-1065, and Ser-1107–Phe-1147. The interval Ala-1104–Pro-1123 is disordered.

The protein belongs to the TRIM/RBCC family.

The protein localises to the cytoplasm. It is found in the P-body. In terms of biological role, heterochronic protein which acts downstream of let-7 in temporal patterning. Plays a role in the developmental timing of postembryonic hypodermal seam cell division and fusion events and adult alae production. Represses lin-29 during late larval stages, which prevents terminal differentiation of hypodermal seam cells and promotes their division. Involved in post-transcriptional gene regulation, uses two independent pathways. Has direct and specific RNA-binding activity and, depending on the location (5'UTR or 3'UTR) of the target site, triggers either mRNA decay or repression of translation. Degrades the mRNA of transcription factor dmd-3 to govern the timing and extent of male tail tip morphogenesis. Plays a role in the sexual maturation of the nervous system. This Caenorhabditis elegans protein is Protein lin-41.